Reading from the N-terminus, the 326-residue chain is Target of rapamycin complex subunit lst8 (326 aa).

WD repeat units follow at residues 1 to 37, 40 to 80, 83 to 122, 126 to 165, 168 to 207, 218 to 257, and 268 to 309; these read MNVN…CTRT, HQDS…PVIN, GVSK…LQCQ, QVNA…NEQL, EPDV…GDEV, AHKR…LMTE, and TSRG…REYS.

This sequence belongs to the WD repeat LST8 family. Part of the mechanistic target of rapamycin complex 1 (mTORC1) which contains MTOR, MLST8 and RPTOR. Component of the mechanistic target of rapamycin complex 2 (mTORC2), consisting in two heterotretramers composed of MTOR, MLST8, RICTOR and MAPKAP1/SIN1.

Its subcellular location is the lysosome membrane. The protein resides in the cytoplasm. Subunit of both mTORC1 and mTORC2, which regulates cell growth and survival in response to nutrient and hormonal signals. mTORC1 is activated in response to growth factors or amino acids. In response to nutrients, mTORC1 is recruited to the lysosome membrane and promotes protein, lipid and nucleotide synthesis by phosphorylating several substrates, such as ribosomal protein S6 kinase (RPS6KB1 and RPS6KB2) and EIF4EBP1 (4E-BP1). In the same time, it inhibits catabolic pathways by phosphorylating the autophagy initiation components ULK1 and ATG13, as well as transcription factor TFEB, a master regulators of lysosomal biogenesis and autophagy. The mTORC1 complex is inhibited in response to starvation and amino acid depletion. Within mTORC1, MLST8 interacts directly with MTOR and enhances its kinase activity. In nutrient-poor conditions, stabilizes the MTOR-RPTOR interaction and favors RPTOR-mediated inhibition of MTOR activity. As part of the mTORC2 complex, transduces signals from growth factors to pathways involved in proliferation, cytoskeletal organization, lipogenesis and anabolic output. mTORC2 is also activated by growth factors, but seems to be nutrient-insensitive. In response to growth factors, mTORC2 phosphorylates and activates AGC protein kinase family members, including AKT (AKT1, AKT2 and AKT3), PKC (PRKCA, PRKCB and PRKCE) and SGK1. mTORC2 functions upstream of Rho GTPases to regulate the actin cytoskeleton, probably by activating one or more Rho-type guanine nucleotide exchange factors. mTORC2 promotes the serum-induced formation of stress-fibers or F-actin. Within mTORC2, MLST8 acts as a bridge between MAPKAP1/SIN1 and MTOR. In Danio rerio (Zebrafish), this protein is Target of rapamycin complex subunit lst8 (mlst8).